The chain runs to 129 residues: Small ribosomal subunit protein uS9 (129 aa).

It belongs to the universal ribosomal protein uS9 family.

The chain is Small ribosomal subunit protein uS9 from Gemmatimonas aurantiaca (strain DSM 14586 / JCM 11422 / NBRC 100505 / T-27).